The sequence spans 726 residues: E3 SUMO-protein ligase SIZ2 (726 aa).

An SAP domain is found at 43–77; that stretch reads MEQLKVLELKQICKSLDLSITGKKAVLQDRIKQFL. A PINIT domain is found at 139-291; that stretch reads TALPPYSQQQ…SISCFIVEVF (153 aa). The segment at 323 to 408 adopts an SP-RING-type zinc-finger fold; that stretch reads DDDDIITTST…IQNCNEDVEQ (86 aa). 4 residues coordinate Zn(2+): Cys-354, His-356, Cys-377, and Cys-380. Residues 507 to 533 are disordered; sequence PSESEGSSDYNPNHTSTPKGSPTMDQD. The segment covering 510–533 has biased composition (polar residues); the sequence is SEGSSDYNPNHTSTPKGSPTMDQD.

The protein belongs to the PIAS family. In terms of assembly, interacts with CDC12. In terms of processing, autosumoylated upon ethanol stress.

Its subcellular location is the nucleus. It functions in the pathway protein modification; protein sumoylation. May act as an E3 ligase mediating SUMO/Smt3 attachment to septins. May be involved in chromosome maintenance. The protein is E3 SUMO-protein ligase SIZ2 (NFI1) of Saccharomyces cerevisiae (strain ATCC 204508 / S288c) (Baker's yeast).